Reading from the N-terminus, the 1795-residue chain is Type III effector AvrE (1795 aa).

Polar residues predominate over residues 1–18 (MQSPSIHRNTGSIIQPTV). A disordered region spans residues 1 to 227 (MQSPSIHRNT…PPREPMLWRS (227 aa)). Residues 60–75 (KSKAPQQKAATPPTAK) show a composition bias toward low complexity. Polar residues-rich tracts occupy residues 97–109 (GFSN…THSA) and 117–127 (HPNQASSSGAQ). Positions 129–154 (HEIHPEAAPRKNLRVRFDLPQDRLER) are enriched in basic and acidic residues. Residues 174-191 (ATRQFRSPDSHLQGSDGT) show a composition bias toward polar residues. Low complexity predominate over residues 203 to 215 (PSSSGSKIGDSDG). Short sequence motifs (wxxxE) lie at residues 393 to 397 (WKIPE) and 829 to 833 (WQRFE). The segment at 1461–1488 (QIGGSHTAPTGTPASAPGPTPASQTAAN) is disordered. The span at 1467-1487 (TAPTGTPASAPGPTPASQTAA) shows a compositional bias: low complexity. The short motif at 1787 to 1790 (KKEG) is the ERMRS element.

The protein belongs to the AvrE family. As to quaternary structure, in planta interaction assays, interacts with the A.thaliana protein phosphatase 2A (PP2A) via direct interaction/association with specific B' regulatory subunits.

It is found in the secreted. The protein resides in the host cell. The protein localises to the host cell membrane. With respect to regulation, polyamidoamine dendrimers inhibit channel and virulence activities. In terms of biological role, major virulence factor that may function as a water- and solute-permeable channel dedicated to creating osmotic/water potential perturbation and a water- and nutrient-rich apoplast in which bacteria multiply within the infected plant tissues. Expression in Xenopus oocytes results in inward and outward currents, permeability to water and osmolarity-dependent oocyte swelling and bursting. Elicits cell death in host tomato leaves and in non-host Nicotiana tabacum leaves. Acts within plant cells and promotes lesion formation. The combined action of AvrE and HopM1 is particularly important in promoting bacterial growth in plants. Contributes to the down-regulation of a specific subset of A.thaliana genes during infection, including NHL13, which is required for antibacterial immunity. This Pseudomonas syringae pv. tomato (strain ATCC BAA-871 / DC3000) protein is Type III effector AvrE.